Reading from the N-terminus, the 389-residue chain is Mannitol-1-phosphate 5-dehydrogenase (389 aa).

5–16 (AVHFGAGNIGRG) is a binding site for NAD(+). Lys-215 is an active-site residue.

This sequence belongs to the mannitol dehydrogenase family. Monomer.

It catalyses the reaction D-mannitol 1-phosphate + NAD(+) = beta-D-fructose 6-phosphate + NADH + H(+). In terms of biological role, catalyzes the NAD(H)-dependent interconversion of D-fructose 6-phosphate and D-mannitol 1-phosphate in the mannitol metabolic pathway. In Sclerotinia sclerotiorum (strain ATCC 18683 / 1980 / Ss-1) (White mold), this protein is Mannitol-1-phosphate 5-dehydrogenase.